The sequence spans 79 residues: Antimicrobial peptide ToAP2 (79 aa).

An N-terminal signal peptide occupies residues 1 to 23; the sequence is MQFKKQLLVIFFAYFLVVNESEA. A propeptide spanning residues 50-79 is cleaved from the precursor; that stretch reads SLMKRELKNLYDPYQRSVEMERLLKELPLY.

It belongs to the non-disulfide-bridged peptide (NDBP) superfamily. Medium-length antimicrobial peptide (group 3) family. As to expression, expressed by the venom gland.

It localises to the secreted. The protein resides in the target cell membrane. Functionally, antimicrobial peptide. Shows antibacterial activity against all M.massiliense bacterial strains tested. Has antifungal activity against Candida spp. and two Cryptococcus neoformans strains with MICs values ranging from 6.25 to 200 uM. Also shows an inhibitory activity on C.albicans biofilms at high concentrations. Exhibits chemotactic activity for monocytes, neutrophils, and eosinophils. Shows low cytotoxic activity and has weak hemolytic activity on human erythrocytes. In vivo, treatment of infected mice with M.massiliense reduces the bacterial load in the liver, lung, and spleen. May act by disrupting the integrity of the bacterial cell membrane. This Tityus obscurus (Amazonian scorpion) protein is Antimicrobial peptide ToAP2.